The following is a 1069-amino-acid chain: Adenylate-forming reductase (1069 aa).

The segment at 20–391 (HPEDPKAVKS…WKLRQDINYR (372 aa)) is adenylation (A) domain. Residues histidine 262, 357–358 (AH), threonine 362, and 437–440 (AVGR) each bind AMP. The region spanning 576-656 (DSLEEDLKDL…KLGASLRHLA (81 aa)) is the Carrier domain. At serine 612 the chain carries O-(pantetheine 4'-phosphoryl)serine. Residues 686 to 1032 (TVLLTGSTGN…TGKVILDTSR (347 aa)) form a reductase (R) domain region. NADP(+) contacts are provided by residues 693-696 (TGNL), arginine 719, 785-787 (NAW), tyrosine 863, and lysine 867.

The protein belongs to the adenylate-forming reductase family.

The catalysed reaction is 5-methylorsellinate + ATP + NADPH + H(+) = 2,4-dihydroxy 5,6-dimethylbenzaldehyde + AMP + diphosphate + NADP(+). It functions in the pathway secondary metabolite biosynthesis. Its function is as follows. Non-canonical non-ribosomal peptide synthetase; part of the cluster A that mediates the biosynthesis of azasperpyranones, members of the azaphilone family that exhibit anti-cancer activities. Azasperpyranones are synthesized by 2 clusters, A and B. Cluster A is responsible for the production of the polyhydric phenol moiety while the azaphilonoid scaffold is produced by the cluster B. The non-reducing polyketide synthase ATEG_03629 produces 5-methyl orsellinic acid, which is then reduced to 5-methyl orsellinic aldehyde by the NRPS-like protein ATEG_03630. 5-methyl orsellinic aldehyde is then first hydroxylated by the FAD-dependent monooxygenase ATEG_03635 and subsequently hydroxylated by the cytochrome P450 monooxygenase ATEG_03631 to produce the unstable polyhydric phenol precursor of azasperpyranones. On the other hand, the polyketide synthase ATEG_07659 is responsible for producing the 3,5-dimethyloctadienone moiety from acetyl-CoA, three malonyl-CoA, and two S-adenosyl methionines (SAM). The 3,5-dimethyloctadienone moiety is then loaded onto the SAT domain of ATEG_07661 and extended with four malonyl-CoA and one SAM, which leads to the formation of 2,4-dihydroxy-6-(5,7-dimethyl-2-oxo-trans-3-trans-5-nonadienyl)-3-methylbenzaldehyde (compound 8) after reductive release and aldol condensation. The FAD-dependent monooxygenase ATEG_07662 is the next enzyme in the biosynthesis sequence and hydroxylates the side chain at the benzylic position of compound 8. In Aspergillus nidulans, afoF, the ortholog of the FAD-dependent oxygenase ATEG_07660, is the key enzyme for the biosynthesis of asperfuranone by catalyzing the hydroxylation at C-8 of to prevent the formation of a six-membered ring hemiacetal intermediate and thus facilitating the formation of a five-membered ring to produce asperfuranone. In Aspergillus terreus, ATEG_07660 is probably not functional, which leads to the formation of the six-membered ring hemiacetal intermediate presperpyranone instead of asperfuranone. Finally, ATEG_03636 is involved in the condensation of the polyhydric phenol moiety produced by cluster A and the perasperpyranone precursor produced by cluster B, to yield azasperpyranone A. Further modifications of azasperpyranone A result in the production of derivatives, including azasperpyranone B to F. This Aspergillus terreus (strain NIH 2624 / FGSC A1156) protein is Adenylate-forming reductase.